Consider the following 80-residue polypeptide: Small ribosomal subunit protein uS17 (80 aa).

Belongs to the universal ribosomal protein uS17 family. In terms of assembly, part of the 30S ribosomal subunit.

Its function is as follows. One of the primary rRNA binding proteins, it binds specifically to the 5'-end of 16S ribosomal RNA. In Microcystis aeruginosa (strain NIES-843 / IAM M-2473), this protein is Small ribosomal subunit protein uS17.